A 26-amino-acid chain; its full sequence is Photosystem II stability/assembly factor HCF136, chloroplastic (26 aa).

Belongs to the Ycf48 family.

The protein resides in the plastid. The protein localises to the chloroplast thylakoid lumen. In terms of biological role, essential for photosystem II (PSII) biogenesis; required for assembly of an early intermediate in PSII assembly that includes D2 (psbD) and cytochrome b559. This is Photosystem II stability/assembly factor HCF136, chloroplastic from Populus euphratica (Euphrates poplar).